The chain runs to 90 residues: C-C motif chemokine 4 homolog (90 aa).

An N-terminal signal peptide occupies residues 1–21; the sequence is MKVSVAALAVLLIAICYQTSA. 2 cysteine pairs are disulfide-bonded: C32–C56 and C33–C72.

The protein belongs to the intercrine beta (chemokine CC) family. Homodimer.

It is found in the secreted. Functionally, monokine with inflammatory and chemokinetic properties. This is C-C motif chemokine 4 homolog (CCL4) from Gallus gallus (Chicken).